The primary structure comprises 168 residues: MKLTSKGRYAVTAMLDVALHSQKSPVPLADISERQGISLSYLEQLFSKLRKAGLVASVRGPGGGYRLGADAFTISIGTVIAAVDESVDATKCQGKGDCQGGTRCLTHTLWRDLSSRITDFLNNITLGELMSDNEVIEISDRQDIDLAVNHGLANKTINTAPIGVNFRS.

In terms of domain architecture, HTH rrf2-type spans 2–131 (KLTSKGRYAV…NNITLGELMS (130 aa)). Residues 28 to 51 (LADISERQGISLSYLEQLFSKLRK) constitute a DNA-binding region (H-T-H motif). [2Fe-2S] cluster contacts are provided by Cys92, Cys98, and Cys104.

[2Fe-2S] cluster serves as cofactor.

Functionally, regulates the transcription of several operons and genes involved in the biogenesis of Fe-S clusters and Fe-S-containing proteins. The protein is HTH-type transcriptional regulator IscR of Vibrio vulnificus (strain CMCP6).